A 125-amino-acid polypeptide reads, in one-letter code: Holo-[acyl-carrier-protein] synthase (125 aa).

D8 and E60 together coordinate Mg(2+).

The protein belongs to the P-Pant transferase superfamily. AcpS family. The cofactor is Mg(2+).

The protein localises to the cytoplasm. The catalysed reaction is apo-[ACP] + CoA = holo-[ACP] + adenosine 3',5'-bisphosphate + H(+). Its function is as follows. Transfers the 4'-phosphopantetheine moiety from coenzyme A to a Ser of acyl-carrier-protein. This chain is Holo-[acyl-carrier-protein] synthase, found in Wolbachia sp. subsp. Brugia malayi (strain TRS).